Reading from the N-terminus, the 537-residue chain is Caspase recruitment domain-containing protein 8 (537 aa).

Over residues 1-23 the composition is skewed to basic and acidic residues; the sequence is MEKKECPEKSSSSEEELPRRDSG. 2 disordered regions span residues 1–28 and 113–133; these read MEKK…SRNI and GDIP…SGDI. Residues 161-296 are ZU5; the sequence is FLGPEGNVDV…FYAVLESPSF (136 aa). An FIIND domain is found at 161–446; sequence FLGPEGNVDV…LQLVAASAPP (286 aa). The UPA stretch occupies residues 297-446; sequence SLMGILLRIA…LQLVAASAPP (150 aa). A CARD domain is found at 446 to 536; it reads PPFSGAAFVK…YLVSYLRQQN (91 aa).

Interacts with DPP9; leading to inhibit activation of the inflammasome. DPP9 acts via formation of a ternary complex, composed of a DPP9 homodimer, one full-length CARD8 protein, and one cleaved C-terminus of CARD8 (Caspase recruitment domain-containing protein 8, C-terminus). Interacts with DPP8; leading to inhibit activation of the inflammasome, probably via formation of a ternary complex with DPP8. Interacts with NLRP3. Interacts with IKBKG/NEMO. Interacts with DRAL. Binds to caspase-1 (CASP1), CARD16/pseudo-ICE and CARD18/ICEBERG. Interacts with NLRP2 (via NACHT domain). In terms of assembly, interacts with the C-terminal part of CARD8 (Caspase recruitment domain-containing protein 8, C-terminus) in absence of pathogens and other damage-associated signals. As to quaternary structure, interacts with the N-terminal part of CARD8 (Caspase recruitment domain-containing protein 8, N-terminus) in absence of pathogens and other damage-associated signals. Homomultimer; forms the CARD8 inflammasome polymeric complex, a filament composed of homopolymers of this form in response to pathogens and other damage-associated signals. The CARD8 inflammasome polymeric complex directly recruits pro-caspase-1 (proCASP1) independently of PYCARD/ASC. Interacts (via CARD domain) with CASP1 (via CARD domain); leading to CASP1 activation. Post-translationally, undergoes autocatalytic processing within the FIIND domain to generate the N-terminal and C-terminal parts, which are associated non-covalently in absence of pathogens and other damage-associated signals. In terms of processing, ubiquitinated by the N-end rule pathway in response to pathogens and other damage-associated signals, leading to its degradation by the proteasome and subsequent release of the cleaved C-terminal part of the protein (Caspase recruitment domain-containing protein 8, C-terminus), which polymerizes and forms the CARD8 inflammasome. (Microbial infection) Proteolytic cleavage by HIV-1 protease in the disordered region and within the ZU5 region of the FIIND domain promotes ubiquitination of the N-terminal part by the N-end rule pathway and degradation by the proteasome, releasing the cleaved C-terminal part of the protein (Caspase recruitment domain-containing protein 8, C-terminus), which polymerizes and forms the CARD8 inflammasome. Post-translationally, undergoes less autocatalytic processing within the FIIND domain compared to isoform 5. High expression in lung, ovary, testis and placenta. Lower expression in heart, kidney and liver. Also expressed in spleen, lymph node and bone marrow.

It localises to the cytoplasm. Its subcellular location is the nucleus. The protein resides in the inflammasome. With respect to regulation, CARD8 inflammasome is activated by HIV-1 protease activity: HIV-1 protease cleaves CARD8, promoting ubiquitination and degradation of the N-terminal part, releasing the cleaved C-terminal part of the protein (Caspase recruitment domain-containing protein 8, C-terminus), which polymerizes and forms the CARD8 inflammasome. CARD8 inflammasome is inhibited by DPP8 and DPP9, which sequester the C-terminal fragment of CARD8 (Caspase recruitment domain-containing protein 8, C-terminus) in a ternary complex, thereby preventing CARD8 oligomerization and activation. CARD8 inflammasome is activated by Val-boroPro (Talabostat, PT-100), an inhibitor of dipeptidyl peptidases DPP8 and DPP9. Val-boroPro relieves inhibition of DPP8 and/or DPP9 by inducing the proteasome-mediated destruction of the N-terminal part of CARD8, releasing its C-terminal part from autoinhibition. Indirectly activated by the pseudodipeptide CQ31. CQ31 directly inactivates the peptidases PEPD and XPNPEP1, leading to an accumulation of dipeptides that weaky inhibit DDP8 and DPP9, relieving DPP8- and/or DPP9-mediated inhibition of CARD8. In terms of biological role, inflammasome sensor, which mediates inflammasome activation in response to various pathogen-associated signals, leading to subsequent pyroptosis of CD4(+) T-cells and macrophages. Inflammasomes are supramolecular complexes that assemble in the cytosol in response to pathogens and other damage-associated signals and play critical roles in innate immunity and inflammation. Acts as a recognition receptor (PRR): recognizes specific pathogens and other damage-associated signals, such as HIV-1 protease activity or Val-boroPro inhibitor, and mediates CARD8 inflammasome activation. In response to pathogen-associated signals, the N-terminal part of CARD8 is degraded by the proteasome, releasing the cleaved C-terminal part of the protein (Caspase recruitment domain-containing protein 8, C-terminus), which polymerizes to initiate the formation of the inflammasome complex: the CARD8 inflammasome directly recruits pro-caspase-1 (proCASP1) independently of PYCARD/ASC and promotes caspase-1 (CASP1) activation, which subsequently cleaves and activates inflammatory cytokines IL1B and IL18 and gasdermin-D (GSDMD), leading to pyroptosis. Ability to sense HIV-1 protease activity leads to the clearance of latent HIV-1 in patient CD4(+) T-cells after viral reactivation; in contrast, HIV-1 can evade CARD8-sensing when its protease remains inactive in infected cells prior to viral budding. Also acts as a negative regulator of the NLRP3 inflammasome. May also act as an inhibitor of NF-kappa-B activation. Its function is as follows. Constitutes the precursor of the CARD8 inflammasome, which mediates autoproteolytic processing within the FIIND domain to generate the N-terminal and C-terminal parts, which are associated non-covalently in absence of pathogens and other damage-associated signals. Functionally, regulatory part that prevents formation of the CARD8 inflammasome: in absence of pathogens and other damage-associated signals, interacts with the C-terminal part of CARD8 (Caspase recruitment domain-containing protein 8, C-terminus), preventing activation of the CARD8 inflammasome. In response to pathogen-associated signals, this part is ubiquitinated by the N-end rule pathway and degraded by the proteasome, releasing the cleaved C-terminal part of the protein, which polymerizes and forms the CARD8 inflammasome. Constitutes the active part of the CARD8 inflammasome. In absence of pathogens and other damage-associated signals, interacts with the N-terminal part of CARD8 (Caspase recruitment domain-containing protein 8, N-terminus), preventing activation of the CARD8 inflammasome. In response to pathogen-associated signals, the N-terminal part of CARD8 is degraded by the proteasome, releasing this form, which polymerizes to form the CARD8 inflammasome complex: the CARD8 inflammasome complex then directly recruits pro-caspase-1 (proCASP1) and promotes caspase-1 (CASP1) activation, leading to gasdermin-D (GSDMD) cleavage and subsequent pyroptosis. This chain is Caspase recruitment domain-containing protein 8, found in Homo sapiens (Human).